A 306-amino-acid chain; its full sequence is Curved DNA-binding protein (306 aa).

The J domain occupies 5–69 (DYYAIMGVKP…QRRAEYDQMW (65 aa)).

Its subcellular location is the cytoplasm. It localises to the nucleoid. Functionally, DNA-binding protein that preferentially recognizes a curved DNA sequence. It is probably a functional analog of DnaJ; displays overlapping activities with DnaJ, but functions under different conditions, probably acting as a molecular chaperone in an adaptive response to environmental stresses other than heat shock. Lacks autonomous chaperone activity; binds native substrates and targets them for recognition by DnaK. Its activity is inhibited by the binding of CbpM. The sequence is that of Curved DNA-binding protein from Escherichia coli (strain SMS-3-5 / SECEC).